We begin with the raw amino-acid sequence, 829 residues long: Leucine--tRNA ligase (829 aa).

The 'HIGH' region signature appears at 40–50; it reads PYPSGNIHMGH. The 'KMSKS' region signature appears at 581-585; it reads KMSKS. Residue K584 coordinates ATP.

The protein belongs to the class-I aminoacyl-tRNA synthetase family.

It localises to the cytoplasm. It carries out the reaction tRNA(Leu) + L-leucine + ATP = L-leucyl-tRNA(Leu) + AMP + diphosphate. This chain is Leucine--tRNA ligase, found in Nitratidesulfovibrio vulgaris (strain ATCC 29579 / DSM 644 / CCUG 34227 / NCIMB 8303 / VKM B-1760 / Hildenborough) (Desulfovibrio vulgaris).